The chain runs to 848 residues: Leucine--tRNA ligase (848 aa).

Residues 1–16 (MCPEQPHDTRAERDEM) are compositionally biased toward basic and acidic residues. Residues 1-30 (MCPEQPHDTRAERDEMSEQTQQAAQPAETA) are disordered. The segment covering 18-30 (EQTQQAAQPAETA) has biased composition (low complexity). The short motif at 69-79 (PYPSGDLHMGH) is the 'HIGH' region element. Residues 614–618 (KMSKS) carry the 'KMSKS' region motif. K617 serves as a coordination point for ATP.

The protein belongs to the class-I aminoacyl-tRNA synthetase family.

The protein localises to the cytoplasm. The catalysed reaction is tRNA(Leu) + L-leucine + ATP = L-leucyl-tRNA(Leu) + AMP + diphosphate. The polypeptide is Leucine--tRNA ligase (Nocardioides sp. (strain ATCC BAA-499 / JS614)).